Consider the following 303-residue polypeptide: Elongation factor Ts (303 aa).

An involved in Mg(2+) ion dislocation from EF-Tu region spans residues 82–85; it reads TDFV.

It belongs to the EF-Ts family.

Its subcellular location is the cytoplasm. Associates with the EF-Tu.GDP complex and induces the exchange of GDP to GTP. It remains bound to the aminoacyl-tRNA.EF-Tu.GTP complex up to the GTP hydrolysis stage on the ribosome. The chain is Elongation factor Ts from Clostridioides difficile (strain 630) (Peptoclostridium difficile).